Consider the following 113-residue polypeptide: Nucleoid-associated protein SAV_4556 (113 aa).

The protein belongs to the YbaB/EbfC family. Homodimer.

The protein localises to the cytoplasm. Its subcellular location is the nucleoid. Binds to DNA and alters its conformation. May be involved in regulation of gene expression, nucleoid organization and DNA protection. This Streptomyces avermitilis (strain ATCC 31267 / DSM 46492 / JCM 5070 / NBRC 14893 / NCIMB 12804 / NRRL 8165 / MA-4680) protein is Nucleoid-associated protein SAV_4556.